The primary structure comprises 156 residues: Snaclec rhinocetin subunit alpha (156 aa).

The signal sequence occupies residues Met-1–Ala-23. 3 cysteine pairs are disulfide-bonded: Cys-27/Cys-38, Cys-55/Cys-150, and Cys-125/Cys-142. Positions Tyr-34–Met-151 constitute a C-type lectin domain.

It belongs to the snaclec family. In terms of assembly, heterodimer; disulfide-linked. As to expression, expressed by the venom gland.

The protein resides in the secreted. Its function is as follows. Antagonist of the alpha-2 subunit of the integrin alpha-2/beta-1 (ITGA2/ITGB1) on human platelets and endothelial cells. This protein inhibits collagen-stimulated activation of human platelets in a dose-dependent manner. In addition, it antagonizes the binding of monoclonal antibodies against the alpha-2 subunit of integrin alpha-2/beta-1 to platelets and it coimmunoprecipitates with this integrin. The sequence is that of Snaclec rhinocetin subunit alpha from Bitis rhinoceros (West African gaboon viper).